A 34-amino-acid polypeptide reads, in one-letter code: Jingzhaotoxin F7-10.36 (34 aa).

3 disulfides stabilise this stretch: Cys2–Cys17, Cys9–Cys22, and Cys16–Cys29.

This sequence belongs to the neurotoxin 10 (Hwtx-1) family. 50 (Jztz-F7) subfamily. As to expression, expressed by the venom gland.

The protein localises to the secreted. Probable ion channel inhibitor. This chain is Jingzhaotoxin F7-10.36, found in Chilobrachys guangxiensis (Chinese earth tiger tarantula).